A 325-amino-acid polypeptide reads, in one-letter code: Replication factor C small subunit (325 aa).

Position 47–54 (Gly-47–Thr-54) interacts with ATP.

This sequence belongs to the activator 1 small subunits family. RfcS subfamily. In terms of assembly, heteromultimer composed of small subunits (RfcS) and large subunits (RfcL).

In terms of biological role, part of the RFC clamp loader complex which loads the PCNA sliding clamp onto DNA. This is Replication factor C small subunit from Aeropyrum pernix (strain ATCC 700893 / DSM 11879 / JCM 9820 / NBRC 100138 / K1).